The chain runs to 349 residues: DNA integrity scanning protein DisA (349 aa).

Positions 3 to 143 (KQDLMDIIVK…LKYRLKNFDE (141 aa)) constitute a DAC domain. Residues G70, V88, and 101 to 105 (TRHRT) each bind ATP.

Belongs to the DisA family. In terms of assembly, homooctamer. Mg(2+) serves as cofactor.

It catalyses the reaction 2 ATP = 3',3'-c-di-AMP + 2 diphosphate. Participates in a DNA-damage check-point. DisA forms globular foci that rapidly scan along the chromosomes searching for lesions. Its function is as follows. Also has diadenylate cyclase activity, catalyzing the condensation of 2 ATP molecules into cyclic di-AMP (c-di-AMP). c-di-AMP likely acts as a signaling molecule that may couple DNA integrity with a cellular process. The polypeptide is DNA integrity scanning protein DisA (Fusobacterium nucleatum subsp. nucleatum (strain ATCC 25586 / DSM 15643 / BCRC 10681 / CIP 101130 / JCM 8532 / KCTC 2640 / LMG 13131 / VPI 4355)).